The primary structure comprises 265 residues: MQLEKVPRAEYQTKWATNTVPKPTDFYHQLYNLSFSLTLTSQRWNTYGTGWLIDWKDTSTNENKFTAYLATNFHVADTLKNPHDYPPYNQVDNTQDLTTSFRIGKYTDPSLFGLYTNVKHAFVDVQLAALPKMAYAAVDFVDYRFDNKHWKSLNEICPEVGLKPYADFAVLEVPLYLNNKLDYQVWENFIKPAIATYKALGDSTNLFASTSSSDLQNDTYFALGYPLLESNIDAIHFNQTGATLTSVPVKDRIKVKNQSFWTLNK.

The protein belongs to the MG067/MG068/MG395 family.

This is an uncharacterized protein from Mycoplasma pneumoniae (strain ATCC 29342 / M129 / Subtype 1) (Mycoplasmoides pneumoniae).